The chain runs to 405 residues: Intraflagellar transport protein 57 homolog (405 aa).

Residues 252 to 380 (ETLKTNILEN…AQLNLEVALL (129 aa)) adopt a coiled-coil conformation.

It belongs to the IFT57 family.

The protein resides in the cytoplasm. Its subcellular location is the cytoskeleton. It localises to the cilium basal body. Its function is as follows. Required for the formation of cilia. The polypeptide is Intraflagellar transport protein 57 homolog (Drosophila melanogaster (Fruit fly)).